Consider the following 531-residue polypeptide: Putative aldehyde dehydrogenase family 7 member A1 homolog (531 aa).

264–269 (GSSEIG) is a binding site for NAD(+). The Proton acceptor role is filled by Glu-286. Catalysis depends on Cys-320, which acts as the Nucleophile.

This sequence belongs to the aldehyde dehydrogenase family. Homotetramer.

It catalyses the reaction an aldehyde + NAD(+) + H2O = a carboxylate + NADH + 2 H(+). The chain is Putative aldehyde dehydrogenase family 7 member A1 homolog (alh-9) from Caenorhabditis elegans.